The primary structure comprises 194 residues: Exopolysaccharide II synthesis transcriptional activator ExpG (194 aa).

The region spanning Tyr49–Leu184 is the HTH marR-type domain.

Its function is as follows. Transcriptional activator of genes for galactoglucan synthesis (exopolysaccharide II or EPS II). In Rhizobium meliloti (strain 1021) (Ensifer meliloti), this protein is Exopolysaccharide II synthesis transcriptional activator ExpG (expG).